The sequence spans 215 residues: Pyridoxine/pyridoxamine 5'-phosphate oxidase (215 aa).

Residues 9-12 and lysine 69 each bind substrate; that span reads RRDY. FMN is bound by residues 64 to 69, 79 to 80, lysine 86, and glutamine 108; these read RVLLLK and FT. The substrate site is built by tyrosine 126, arginine 130, and serine 134. FMN contacts are provided by residues 143-144 and tryptophan 188; that span reads QS. Residue 194 to 196 coordinates substrate; that stretch reads RLH. Arginine 198 provides a ligand contact to FMN.

Belongs to the pyridoxamine 5'-phosphate oxidase family. In terms of assembly, homodimer. FMN serves as cofactor.

The enzyme catalyses pyridoxamine 5'-phosphate + O2 + H2O = pyridoxal 5'-phosphate + H2O2 + NH4(+). The catalysed reaction is pyridoxine 5'-phosphate + O2 = pyridoxal 5'-phosphate + H2O2. It functions in the pathway cofactor metabolism; pyridoxal 5'-phosphate salvage; pyridoxal 5'-phosphate from pyridoxamine 5'-phosphate: step 1/1. Its pathway is cofactor metabolism; pyridoxal 5'-phosphate salvage; pyridoxal 5'-phosphate from pyridoxine 5'-phosphate: step 1/1. Functionally, catalyzes the oxidation of either pyridoxine 5'-phosphate (PNP) or pyridoxamine 5'-phosphate (PMP) into pyridoxal 5'-phosphate (PLP). The protein is Pyridoxine/pyridoxamine 5'-phosphate oxidase of Pseudomonas putida (strain GB-1).